The sequence spans 96 residues: Large ribosomal subunit protein uL23 (96 aa).

This sequence belongs to the universal ribosomal protein uL23 family. Part of the 50S ribosomal subunit. Contacts protein L29, and trigger factor when it is bound to the ribosome.

In terms of biological role, one of the early assembly proteins it binds 23S rRNA. One of the proteins that surrounds the polypeptide exit tunnel on the outside of the ribosome. Forms the main docking site for trigger factor binding to the ribosome. This chain is Large ribosomal subunit protein uL23, found in Aster yellows witches'-broom phytoplasma (strain AYWB).